A 255-amino-acid polypeptide reads, in one-letter code: F-box/SPRY domain-containing protein 1 (255 aa).

One can recognise an F-box domain in the interval 3 to 51 (DPVAALCNYNVLEVIFSYLELEDLSHCSQVCKSWYHFLNDENSDVWRWH). Residues 61-253 (LKSDLLSSVS…VSMVYLGTPL (193 aa)) form the B30.2/SPRY domain.

It belongs to the FBXO45/Fsn family. As to quaternary structure, component of an E3 ubiquitin ligase complex composed of hiw and Fsn.

It is found in the synapse. It functions in the pathway protein modification; protein ubiquitination. Its function is as follows. Required in the presynaptic motoneuron to down-regulate the levels of wnd and restrain synaptic terminal growth at the neuromuscular junction (NMJ). In Drosophila erecta (Fruit fly), this protein is F-box/SPRY domain-containing protein 1.